The primary structure comprises 1423 residues: DNA-directed RNA polymerase subunit beta' (1423 aa).

Residues cysteine 70, cysteine 72, cysteine 85, and cysteine 88 each contribute to the Zn(2+) site. Positions 461, 463, and 465 each coordinate Mg(2+). Residues cysteine 809, cysteine 883, cysteine 890, and cysteine 893 each contribute to the Zn(2+) site. Residues 1383 to 1423 (EEHAAELRQPVQADTGDDPLGAVVGESHGTDADAGDYLTEE) form a disordered region.

It belongs to the RNA polymerase beta' chain family. The RNAP catalytic core consists of 2 alpha, 1 beta, 1 beta' and 1 omega subunit. When a sigma factor is associated with the core the holoenzyme is formed, which can initiate transcription. It depends on Mg(2+) as a cofactor. Zn(2+) serves as cofactor.

The catalysed reaction is RNA(n) + a ribonucleoside 5'-triphosphate = RNA(n+1) + diphosphate. DNA-dependent RNA polymerase catalyzes the transcription of DNA into RNA using the four ribonucleoside triphosphates as substrates. The protein is DNA-directed RNA polymerase subunit beta' of Rhizorhabdus wittichii (strain DSM 6014 / CCUG 31198 / JCM 15750 / NBRC 105917 / EY 4224 / RW1) (Sphingomonas wittichii).